The chain runs to 1843 residues: Nonribosomal peptide synthetase SIDD (1843 aa).

Residues 1 to 83 (MLSIDDHGGG…QQQQQQQQRS (83 aa)) are disordered. Over residues 65 to 81 (QQQQQQQQQQQQQQQQQ) the composition is skewed to low complexity. The interval 133-528 (TYSELEHLST…TEVEHHIQTC (396 aa)) is adenylation 1. The disordered stretch occupies residues 628-647 (KLGATHADEGPQEEPETDAE). In terms of domain architecture, Carrier 1 spans 641–716 (EPETDAEKKL…AMANKSTSIS (76 aa)). Serine 677 bears the O-(pantetheine 4'-phosphoryl)serine mark. Residues 753 to 1175 (VEDVYPCTPL…ALSDDDAAAL (423 aa)) are condensation 1. One can recognise a Carrier 2 domain in the interval 1289–1365 (SATSQRQRRL…EMAAVMECTD (77 aa)). Serine 1326 bears the O-(pantetheine 4'-phosphoryl)serine mark. Positions 1447–1734 (FFDGPVDLRR…LREIAENCGL (288 aa)) are condensation 2.

Belongs to the NRP synthetase family. It depends on pantetheine 4'-phosphate as a cofactor.

It functions in the pathway siderophore biosynthesis. Nonribosomal peptide synthetase; part of the gene cluster that mediates the biosynthesis of at least 11 siderophores, including beauverichelin A, dimerumic acid (DA), Na-dimethyl coprogen (NADC), eleutherazine B, ferricrocin (FC), fusarinine A, fusarinine C (FsC), metachelin A, mevalonolactone, rhodotorulic acid (RA) and tenellin. This cocktail of siderophores for iron metabolism is essential for virulence, and more specifically for the fungal virulence in penetrating through the host cuticle. Siderophore synthesis is also involved in conidial germination under iron-deficient conditions. SIDC catalyzes the assembly of ferricrocin whereas SIDD catalyzes the assembly of fusarinine C. The polypeptide is Nonribosomal peptide synthetase SIDD (Beauveria bassiana (strain ARSEF 2860) (White muscardine disease fungus)).